We begin with the raw amino-acid sequence, 956 residues long: Ubiquitin carboxyl-terminal hydrolase CYLD (956 aa).

Residues 106 to 593 (CEERFSLFKN…LEIMIGKKKG (488 aa)) form an interaction with TRIP region. CAP-Gly domains are found at residues 153 to 198 (LAER…VFVA) and 253 to 286 (DVLPGKESLGYFVGVDMDNPIGNWDGRFDGVQLC). Residues 309–353 (SVTQERRPPKLAFMSRGVGDKGSSSHNKPKATGSTSDPGNRNRSE) are disordered. A compositionally biased stretch (polar residues) spans 330 to 349 (GSSSHNKPKATGSTSDPGNR). Phosphoserine is present on serine 387. Positions 392-411 (STDFDRSSPPLQPPPVNSLS) are disordered. The tract at residues 394 to 469 (DFDRSSPPLQ…LAMPPGNSHG (76 aa)) is interaction with TRAF2. A phosphoserine mark is found at serine 418 and serine 422. The interval 470-684 (LEVGSLAEVK…FTSEEKDPEE (215 aa)) is interaction with IKBKG/NEMO. A CAP-Gly 3 domain is found at 492-535 (GQPPGLNEVLAGLELEDECAGCTDGTFRGTRYFTCALKKALFVK). The region spanning 592-950 (KGIQGHYNSC…DAYMCMYQSP (359 aa)) is the USP domain. Cysteine 601 functions as the Nucleophile in the catalytic mechanism. A B-box region spans residues 781 to 833 (LEDTPRQCRICGGLAMYECRECYDDPDISAGKIKQFCKTCNTQVHLHPKRLNH). Cysteine 788, cysteine 791, cysteine 799, cysteine 802, cysteine 817, cysteine 820, histidine 825, and histidine 833 together coordinate Zn(2+). The active-site Proton acceptor is histidine 871.

This sequence belongs to the peptidase C19 family. In terms of assembly, interacts (via CAP-Gly domain) with IKBKG/NEMO (via proline-rich C-terminal region). Interacts with TRAF2 and TRIP. Interacts with PLK1, DVL1, DVL3, MAVS, TBK1, IKKE and RIGI. Interacts (via CAP-Gly domain) with microtubules. Interacts with HDAC6 and BCL3. Interacts with MAP3K7. Identified in a complex with TRAF6 and SQSTM1. Interacts with OPTN and SQSTM1. Interacts with CEP350. Interacts with RNF31; the interaction is indirect and is mediated via SPATA2. Interacts with SPATA2 (via the PUB domain); the interaction is direct and recruits CYLD to the LUBAC complex, thereby regulating TNF-alpha-induced necroptosis. Phosphorylated on several serine residues by IKKA and/or IKKB in response to immune stimuli. Phosphorylation requires IKBKG. Phosphorylation abolishes TRAF2 deubiquitination, interferes with the activation of Jun kinases, and strongly reduces CD40-dependent gene activation by NF-kappa-B. In terms of processing, ubiquitinated. Polyubiquitinated in hepatocytes treated with palmitic acid. Ubiquitination is mediated by E3 ligase TRIM47 and leads to proteasomal degradation.

The protein resides in the cytoplasm. Its subcellular location is the perinuclear region. It localises to the cytoskeleton. It is found in the cell membrane. The protein localises to the microtubule organizing center. The protein resides in the centrosome. Its subcellular location is the spindle. It localises to the cilium basal body. The enzyme catalyses Thiol-dependent hydrolysis of ester, thioester, amide, peptide and isopeptide bonds formed by the C-terminal Gly of ubiquitin (a 76-residue protein attached to proteins as an intracellular targeting signal).. Functionally, deubiquitinase that specifically cleaves 'Lys-63'- and linear 'Met-1'-linked polyubiquitin chains and is involved in NF-kappa-B activation and TNF-alpha-induced necroptosis. Negatively regulates NF-kappa-B activation by deubiquitinating upstream signaling factors. Contributes to the regulation of cell survival, proliferation and differentiation via its effects on NF-kappa-B activation. Negative regulator of Wnt signaling. Inhibits HDAC6 and thereby promotes acetylation of alpha-tubulin and stabilization of microtubules. Plays a role in the regulation of microtubule dynamics, and thereby contributes to the regulation of cell proliferation, cell polarization, cell migration, and angiogenesis. Required for normal cell cycle progress and normal cytokinesis. Inhibits nuclear translocation of NF-kappa-B. Plays a role in the regulation of inflammation and the innate immune response, via its effects on NF-kappa-B activation. Dispensable for the maturation of intrathymic natural killer cells, but required for the continued survival of immature natural killer cells. Negatively regulates TNFRSF11A signaling and osteoclastogenesis. Involved in the regulation of ciliogenesis, allowing ciliary basal bodies to migrate and dock to the plasma membrane; this process does not depend on NF-kappa-B activation. Ability to remove linear ('Met-1'-linked) polyubiquitin chains regulates innate immunity and TNF-alpha-induced necroptosis: recruited to the LUBAC complex via interaction with SPATA2 and restricts linear polyubiquitin formation on target proteins. Regulates innate immunity by restricting linear polyubiquitin formation on RIPK2 in response to NOD2 stimulation. Involved in TNF-alpha-induced necroptosis by removing linear ('Met-1'-linked) polyubiquitin chains from RIPK1, thereby regulating the kinase activity of RIPK1. Negatively regulates intestinal inflammation by removing 'Lys-63' linked polyubiquitin chain of NLRP6, thereby reducing the interaction between NLRP6 and PYCARD/ASC and formation of the NLRP6 inflammasome. Does not catalyze deubiquitination of heterotypic 'Lys-63'-/'Lys-48'-linked branched ubiquitin chains. Removes 'Lys-63' linked polyubiquitin chain of MAP3K7, which inhibits phosphorylation and blocks downstream activation of the JNK-p38 kinase cascades. Also removes 'Lys-63'-linked polyubiquitin chains of MAP3K1 and MA3P3K3, which inhibit their interaction with MAP2K1 and MAP2K2. The polypeptide is Ubiquitin carboxyl-terminal hydrolase CYLD (CYLD) (Pongo abelii (Sumatran orangutan)).